Consider the following 37-residue polypeptide: LKCKNKVVPFLKCKNKVVPFLCYKMTLKKVTPKIKRG.

Heterotetramer composed of 2 hemextin A and 2 hemextin B chains; non-covalently linked. Does not exist as a complex in the crude venom. May contain several disulfide bonds. Expressed by the venom gland.

Its subcellular location is the secreted. Hemextin B (monomer): does not show anticoagulant activity. Seems only to synergitically enhance hemextin A activity. Functionally, hemextin AB complex: specifically inhibits the activation of FX (F10) by the TF-FVIIa complex (extrinsic tenase complex (ETC)) (IC(50)= 100 nM, Ki=50 nM) by non-competitively inhibiting the enzymatic activity of FVIIa. In Hemachatus haemachatus (Rinkhals), this protein is Hemextin B.